A 300-amino-acid chain; its full sequence is Free fatty acid receptor 1 (300 aa).

At 1-8 (MDLPPQLS) the chain is on the extracellular side. Residues 9–31 (FALYVSAFALGFPLNLLAIRGAV) traverse the membrane as a helical segment. Over 32–41 (SHAKLRLTPS) the chain is Cytoplasmic. The chain crosses the membrane as a helical span at residues 42-64 (LVYTLHLGCSDLLLAITLPLKAV). At 65–79 (EALASGAWPLPLPFC) the chain is on the extracellular side. A disulfide bridge links cysteine 79 with cysteine 170. A helical membrane pass occupies residues 80 to 101 (PVFALAHFAPLYAGGGFLAALS). The Cytoplasmic segment spans residues 102-121 (AGRYLGAAFPFGYQAIRRPR). The helical transmembrane segment at 122–142 (YSWGVCVAIWALVLCHLGLAL) threads the bilayer. At 143–178 (GLETSGSWLDNSTSSLGINIPVNGSPVCLEAWDPDS) the chain is on the extracellular side. The N-linked (GlcNAc...) asparagine glycan is linked to asparagine 153. The helical transmembrane segment at 179–200 (ARPARLSFSILLFFLPLVITAF) threads the bilayer. At 201–223 (CYVGCLRALVRSGLSHKRKLRAA) the chain is on the cytoplasmic side. A helical transmembrane segment spans residues 224–248 (WVAGGALLTLLLCLGPYNASNVASF). At 249–256 (INPDLGGS) the chain is on the extracellular side. Residues 257–279 (WRKLGLITGAWSVVLNPLVTGYL) form a helical membrane-spanning segment. Over 280 to 300 (GTGPGRGTICVTRTQRGTIQK) the chain is Cytoplasmic.

The protein belongs to the G-protein coupled receptor 1 family. As to expression, expressed in pancreatic islet beta cells (at protein level). Expressed in pancreatic islet beta cells.

It is found in the cell membrane. Its activity is regulated as follows. Is also activated by synthetic agonists, such as AM-8182, AM-6331 and TAK-875 (fasiglifam). AM-8182 is a full agonist, while AM-6331 and TAK-875 (fasiglifam) are partial agonists that potentiate the activity of the endogenous ligands, such as alpha-linolenic acid and gamma-linolenic acid. G-protein coupled receptor for medium and long chain saturated and unsaturated fatty acids that plays an important role in glucose homeostasis. Fatty acid binding increases glucose-stimulated insulin secretion, and may also enhance the secretion of glucagon-like peptide 1 (GLP-1). May also play a role in bone homeostasis; receptor signaling activates pathways that inhibit osteoclast differentiation. Ligand binding leads to a conformation change that triggers signaling via G-proteins that activate phospholipase C, leading to an increase of the intracellular calcium concentration. Seems to act through a G(q) and G(i)-mediated pathway. Mediates the anti-inflammatory effects of omega-3 polyunsaturated fatty acids (PUFAs) via inhibition of NLRP3 inflammasome activation. This is Free fatty acid receptor 1 (Ffar1) from Mus musculus (Mouse).